The primary structure comprises 306 residues: Ribonuclease Z (306 aa).

Zn(2+)-binding residues include His-63, His-65, Asp-67, His-68, His-141, Asp-211, and His-269. Asp-67 acts as the Proton acceptor in catalysis.

This sequence belongs to the RNase Z family. As to quaternary structure, homodimer. It depends on Zn(2+) as a cofactor.

The enzyme catalyses Endonucleolytic cleavage of RNA, removing extra 3' nucleotides from tRNA precursor, generating 3' termini of tRNAs. A 3'-hydroxy group is left at the tRNA terminus and a 5'-phosphoryl group is left at the trailer molecule.. Functionally, zinc phosphodiesterase, which displays some tRNA 3'-processing endonuclease activity. Probably involved in tRNA maturation, by removing a 3'-trailer from precursor tRNA. The polypeptide is Ribonuclease Z (Staphylococcus aureus (strain Mu3 / ATCC 700698)).